We begin with the raw amino-acid sequence, 116 residues long: Large ribosomal subunit protein uL18 (116 aa).

The protein belongs to the universal ribosomal protein uL18 family. As to quaternary structure, part of the 50S ribosomal subunit; part of the 5S rRNA/L5/L18/L25 subcomplex. Contacts the 5S and 23S rRNAs.

This is one of the proteins that bind and probably mediate the attachment of the 5S RNA into the large ribosomal subunit, where it forms part of the central protuberance. The sequence is that of Large ribosomal subunit protein uL18 from Pseudomonas putida (strain W619).